Here is a 505-residue protein sequence, read N- to C-terminus: Deoxyguanosinetriphosphate triphosphohydrolase (505 aa).

One can recognise an HD domain in the interval 66–273 (RLTHSMEVQQ…MEAADDISYC (208 aa)).

The protein belongs to the dGTPase family. Type 1 subfamily. As to quaternary structure, homotetramer. Requires Mg(2+) as cofactor.

It catalyses the reaction dGTP + H2O = 2'-deoxyguanosine + triphosphate + H(+). Functionally, dGTPase preferentially hydrolyzes dGTP over the other canonical NTPs. The polypeptide is Deoxyguanosinetriphosphate triphosphohydrolase (Salmonella schwarzengrund (strain CVM19633)).